The sequence spans 314 residues: Homoserine O-acetyltransferase (314 aa).

Cys-142 acts as the Acyl-thioester intermediate in catalysis. Residues Lys-163 and Ser-192 each coordinate substrate. Residue His-235 is the Proton acceptor of the active site. The active site involves Glu-237. Residue Arg-249 participates in substrate binding.

The protein belongs to the MetA family.

It is found in the cytoplasm. It carries out the reaction L-homoserine + acetyl-CoA = O-acetyl-L-homoserine + CoA. It functions in the pathway amino-acid biosynthesis; L-methionine biosynthesis via de novo pathway; O-acetyl-L-homoserine from L-homoserine: step 1/1. In terms of biological role, transfers an acetyl group from acetyl-CoA to L-homoserine, forming acetyl-L-homoserine. The polypeptide is Homoserine O-acetyltransferase (Streptococcus thermophilus (strain ATCC BAA-491 / LMD-9)).